The sequence spans 133 residues: Ribosome-binding factor A (133 aa).

This sequence belongs to the RbfA family. Monomer. Binds 30S ribosomal subunits, but not 50S ribosomal subunits or 70S ribosomes.

It localises to the cytoplasm. In terms of biological role, one of several proteins that assist in the late maturation steps of the functional core of the 30S ribosomal subunit. Associates with free 30S ribosomal subunits (but not with 30S subunits that are part of 70S ribosomes or polysomes). Required for efficient processing of 16S rRNA. May interact with the 5'-terminal helix region of 16S rRNA. The protein is Ribosome-binding factor A of Alteromonas mediterranea (strain DSM 17117 / CIP 110805 / LMG 28347 / Deep ecotype).